Reading from the N-terminus, the 40-residue chain is Photosystem II reaction center protein L (40 aa).

Residues 19-39 (SLYWGLLLIFVLAVLFSNYFF) traverse the membrane as a helical segment.

This sequence belongs to the PsbL family. As to quaternary structure, PSII is composed of 1 copy each of membrane proteins PsbA, PsbB, PsbC, PsbD, PsbE, PsbF, PsbH, PsbI, PsbJ, PsbK, PsbL, PsbM, PsbT, PsbX, PsbY, PsbZ, Psb30/Ycf12, at least 3 peripheral proteins of the oxygen-evolving complex and a large number of cofactors. It forms dimeric complexes.

It is found in the plastid. The protein resides in the chloroplast thylakoid membrane. Functionally, one of the components of the core complex of photosystem II (PSII). PSII is a light-driven water:plastoquinone oxidoreductase that uses light energy to abstract electrons from H(2)O, generating O(2) and a proton gradient subsequently used for ATP formation. It consists of a core antenna complex that captures photons, and an electron transfer chain that converts photonic excitation into a charge separation. This subunit is found at the monomer-monomer interface and is required for correct PSII assembly and/or dimerization. The chain is Photosystem II reaction center protein L from Nandina domestica (Heavenly bamboo).